Here is a 305-residue protein sequence, read N- to C-terminus: Glycine--tRNA ligase alpha subunit (305 aa).

Belongs to the class-II aminoacyl-tRNA synthetase family. As to quaternary structure, tetramer of two alpha and two beta subunits.

The protein resides in the cytoplasm. The catalysed reaction is tRNA(Gly) + glycine + ATP = glycyl-tRNA(Gly) + AMP + diphosphate. This chain is Glycine--tRNA ligase alpha subunit, found in Streptococcus sanguinis (strain SK36).